Here is an 84-residue protein sequence, read N- to C-terminus: Cell division topological specificity factor (84 aa).

It belongs to the MinE family.

In terms of biological role, prevents the cell division inhibition by proteins MinC and MinD at internal division sites while permitting inhibition at polar sites. This ensures cell division at the proper site by restricting the formation of a division septum at the midpoint of the long axis of the cell. This chain is Cell division topological specificity factor, found in Burkholderia multivorans (strain ATCC 17616 / 249).